Reading from the N-terminus, the 727-residue chain is LIM domain-binding protein 3 (727 aa).

Residues 1–84 form the PDZ domain; the sequence is MSYSVTLTGP…NLSLTLQKSK (84 aa). Phosphoserine is present on residues Ser44, Ser121, and Ser123. The disordered stretch occupies residues 86-197; sequence PIPISTTAPP…GSSQPRQYNN (112 aa). A compositionally biased stretch (low complexity) spans 140 to 156; that stretch reads PTFSPAFSRPSAFSSLA. A compositionally biased stretch (polar residues) spans 188–197; that stretch reads GSSQPRQYNN. At Ser217 the chain carries Phosphoserine. Arg219 is subject to Omega-N-methylarginine. A Phosphoserine modification is found at Ser223. Disordered regions lie at residues 284 to 440 and 472 to 529; these read TEFM…YTPS and APSV…PQVP. A compositionally biased stretch (low complexity) spans 312-385; the sequence is ATTPLLPASA…SAPATHTSYS (74 aa). The span at 428–440 shows a compositional bias: pro residues; it reads PYTPSPAPAYTPS. Polar residues predominate over residues 494-513; it reads DSFSQKFAPGKSTTSISKQT. Omega-N-methylarginine occurs at positions 516 and 533. LIM zinc-binding domains follow at residues 549–607, 608–667, and 668–727; these read PLCG…QFFA, PLCA…LFST, and KCHG…TINL.

Interacts via its LIM domains with various PKC isoforms. Interacts via its PDZ domain with the ACTN2 C-terminal region. Interacts with MYOZ1, MYOZ2 and MYOZ3. Expressed primarily in skeletal muscle and to a lesser extent in heart. Also detected in brain and placenta.

The protein localises to the cytoplasm. It is found in the perinuclear region. Its subcellular location is the cell projection. It localises to the pseudopodium. The protein resides in the cytoskeleton. The protein localises to the myofibril. It is found in the sarcomere. Its subcellular location is the z line. In terms of biological role, may function as an adapter in striated muscle to couple protein kinase C-mediated signaling via its LIM domains to the cytoskeleton. The protein is LIM domain-binding protein 3 of Homo sapiens (Human).